A 417-amino-acid chain; its full sequence is Protein-lysine 6-oxidase (417 aa).

The N-terminal stretch at 1-21 (MRFAWTVLLLGPLQLCALVHC) is a signal peptide. The propeptide at 22–168 (APPAAGQQQP…PPSRVDGMVG (147 aa)) is removed by BMP1. The interval 64-89 (YQPQRRRDPGAAVPGAANASAQQPRT) is disordered. The segment covering 73–84 (GAAVPGAANASA) has biased composition (low complexity). N81, N97, and N144 each carry an N-linked (GlcNAc...) asparagine glycan. The tract at residues 137–174 (AGASRAENQTAPGEVPALSNLRPPSRVDGMVGDDPYNP) is disordered. Y187 carries the sulfotyrosine modification. The lysyl-oxidase like stretch occupies residues 213-417 (PDLVADPYYI…YASGCTISPY (205 aa)). 5 disulfides stabilise this stretch: C238–C244, C291–C340, C324–C330, C351–C361, and C398–C412. H292, H294, and H296 together coordinate Cu cation. A cross-link (lysine tyrosylquinone (Lys-Tyr)) is located at residues 320-355 (KASFCLEDTSCDYGYHRRFACTAHTQGLSPGCYDTY). Residue Y355 is modified to 2',4',5'-topaquinone.

This sequence belongs to the lysyl oxidase family. Interacts with MFAP4. Interacts (via propeptide) with EFEMP2; this interaction is strong and facilitates formation of ternary complexes with ELN during elastic fiber assembly; this interaction limits interaction of EFEMP2 with FBLN5. Cu cation serves as cofactor. The cofactor is lysine tyrosylquinone residue. The lysine tyrosylquinone cross-link (LTQ) is generated by condensation of the epsilon-amino group of a lysine with a topaquinone produced by oxidation of tyrosine. In terms of processing, proteolytically cleaved by BMP1 which removes the propeptide. Also proteolytically cleaved by ADAMTS2 and ADAMTS14, but not by ADAMTS3, at an additional cleavage site downstream of the BMP1 cleavage site. The propeptide plays a role in directing the deposition of this enzyme to elastic fibers, via interaction with tropoelastin. Cleavage by BMP1 to remove the propeptide does not increase enzymatic activity but increases binding to collagen. Cleavage by ADAMTS2 produces a form with reduced collagen-binding activity. Post-translationally, sulfated at Tyr-187 and also at either Tyr-183 or Tyr-184 which enhances binding to collagen. In terms of tissue distribution, heart, placenta, skeletal muscle, kidney, lung and pancreas.

It localises to the secreted. The protein localises to the extracellular space. It catalyses the reaction L-lysyl-[protein] + O2 + H2O = (S)-2-amino-6-oxohexanoyl-[protein] + H2O2 + NH4(+). Responsible for the post-translational oxidative deamination of peptidyl lysine residues in precursors to fibrous collagen and elastin. Regulator of Ras expression. May play a role in tumor suppression. Plays a role in the aortic wall architecture. The polypeptide is Protein-lysine 6-oxidase (LOX) (Homo sapiens (Human)).